The sequence spans 384 residues: F-box only protein 5-B (384 aa).

Disordered regions lie at residues 1–20 (MMCG…KSSA) and 79–106 (DEEN…ETDS). Positions 9 to 19 (PSPKKLLSKSS) are enriched in low complexity. Residues 83 to 99 (SSLQDSGYSSILQNDSP) are compositionally biased toward polar residues. The F-box domain occupies 191 to 238 (AELFHRDFKHLLTKILRHLNAMDLINVIGVSTTWRKILQKDNWAYNTY). The ZBR-type zinc-finger motif lies at 311 to 359 (SLKACVDCGSPAKYDSYLHRAICTRESCKLDFCTLCSCKYHSSKSCLIS). Zn(2+) contacts are provided by Cys-315, Cys-318, Cys-333, Cys-338, Cys-343, Cys-346, His-351, and Cys-356.

Part of a SCF (SKP1-cullin-F-box) protein ligase complex. Interacts with btrc. Interacts with skp1. Interacts with cdc20. Interacts with pin1; stabilizes fbxo5 by preventing its association with btrc in an isomerization-dependent pathway; this interaction is present during G2 phase and prevents fbxo5 degradation. Interacts with plk1. Post-translationally, proteolysed; proteolysis is induced by both cyclin B-cdk1 and cyclin A-cdk1/2 complex through probable phosphorylation. Proteolysis is inhibited by pin1 during G2.

It localises to the nucleus. The protein localises to the cytoplasm. Its subcellular location is the cytoskeleton. It is found in the spindle. The protein resides in the microtubule organizing center. It localises to the centrosome. The protein operates within protein modification; protein ubiquitination. Its function is as follows. Regulates progression through early mitosis by inhibiting the anaphase promoting complex/cyclosome (APC). Binds to the APC activators cdc20 to prevent APC activation. Can also bind directly to the APC to inhibit substrate-binding. Required to arrest unfertilized eggs at metaphase of meiosis II, by preventing their release from metaphase of meiosis II, through inhibition of APC-dependent cyclin B destruction leading to stabilization of cyclin B-cdk1 complex activity. The protein is F-box only protein 5-B (fbxo5-b) of Xenopus laevis (African clawed frog).